Consider the following 86-residue polypeptide: Trypsin inhibitor (86 aa).

Intrachain disulfides connect Cys-8/Cys-65 and Cys-49/Cys-58.

In terms of biological role, serine protease inhibitor which is active against trypsin. Displays strong antifungal activity against a number of phytopathogenic fungi including M.melonis, A.cucumerina, A.solani, C.glaeosporioides and P.capsici. In Fagopyrum tataricum (Tartarian buckwheat), this protein is Trypsin inhibitor.